An 839-amino-acid polypeptide reads, in one-letter code: MAQFDTEYQRLEASYSDSPPGEEDLLVHVAEGSKSPWHHIENLDLFFSRVYNLHQKNGFTCMLIGEIFELMQFLFVVAFTTFLVSCVDYDILFANKMVNHSLHPTEPVKVTLPDAFLPAQVCSARIQENGSLITILVIAGVFWIHRLIKFIYNICCYWEIHSFYLHALRIPMSALPYCTWQEVQARIVQTQKEHQICIHKRELTELDIYHRILRFQNYMVALVNKSLLPLRFRLPGLGEAVFFTRGLKYNFELILFWGPGSLFLNEWSLKAEYKRGGQRLELAQRLSNRILWIGIANFLLCPLILIWQILYAFFSYAEVLKREPGALGARCWSLYGRCYLRHFNELEHELQSRLNRGYKPASKYMNCFLSPLLTLLAKNGAFFAGSILAVLIALTIYDEDVLAVEHVLTTVTLLGVTVTVCRSFIPDQHMVFCPEQLLRVILAHIHYMPDHWQGNAHRSQTRDEFAQLFQYKAVFILEELLSPIVTPLILIFCLRPRALEIIDFFRNFTVEVVGVGDTCSFAQMDVRQHGHPQWLSAGQTEASVYQQAEDGKTELSLMHFAITNPGWQPPRESTAFLGFLKEQVQRDGAAASLAQGGLLPENALFTSIQSLQSESEPLSLIANVVAGSSCRGPPLPRDLQGSRHRAEVASALRSFSPLQPGQAPTGRAHSTMTGSGVDARTASSGSSVWEGQLQSLVLSEYASTEMSLHALYMHQLHKQQAQAEPERHVWHRRESDESGESAPDEGGEGARAPQSIPRSASYPCAAPRPGAPETTALHGGFQRRYGGITDPGTVPRVPSHFSRLPLGGWAEDGQSASRHPEPVPEEGSEDELPPQVHKV.

The tract at residues 1 to 20 is disordered; the sequence is MAQFDTEYQRLEASYSDSPP. At Ala-2 the chain carries N-acetylalanine. The Cytoplasmic portion of the chain corresponds to 2–61; it reads AQFDTEYQRLEASYSDSPPGEEDLLVHVAEGSKSPWHHIENLDLFFSRVYNLHQKNGFTC. The short motif at 8 to 11 is the Tyrosine-based sorting signal element; it reads YQRL. Ser-14, Ser-16, and Ser-18 each carry phosphoserine. A helical transmembrane segment spans residues 62-84; it reads MLIGEIFELMQFLFVVAFTTFLV. Residues 85–128 lie on the Lumenal side of the membrane; that stretch reads SCVDYDILFANKMVNHSLHPTEPVKVTLPDAFLPAQVCSARIQE. Asn-99 is a glycosylation site (N-linked (GlcNAc...) asparagine). A helical membrane pass occupies residues 129–154; the sequence is NGSLITILVIAGVFWIHRLIKFIYNI. The Cytoplasmic portion of the chain corresponds to 155-290; the sequence is CCYWEIHSFY…ELAQRLSNRI (136 aa). An intramembrane segment occupies 291 to 301; sequence LWIGIANFLLC. The Cytoplasmic segment spans residues 302 to 319; it reads PLILIWQILYAFFSYAEV. The stretch at 320-328 is an intramembrane region; the sequence is LKREPGALG. The Cytoplasmic segment spans residues 329 to 371; sequence ARCWSLYGRCYLRHFNELEHELQSRLNRGYKPASKYMNCFLSP. Residues 372 to 397 form a helical membrane-spanning segment; the sequence is LLTLLAKNGAFFAGSILAVLIALTIY. The Lumenal segment spans residues 398–406; that stretch reads DEDVLAVEH. A helical transmembrane segment spans residues 407-424; it reads VLTTVTLLGVTVTVCRSF. At 425-470 the chain is on the cytoplasmic side; that stretch reads IPDQHMVFCPEQLLRVILAHIHYMPDHWQGNAHRSQTRDEFAQLFQ. Residues 471–480 lie within the membrane without spanning it; it reads YKAVFILEEL. Residues 481 to 483 lie on the Cytoplasmic side of the membrane; sequence LSP. The stretch at 484-492 is an intramembrane region; it reads IVTPLILIF. At 493–839 the chain is on the cytoplasmic side; it reads CLRPRALEII…DELPPQVHKV (347 aa). Residues Ser-656, Ser-735, Ser-738, Ser-741, and Ser-828 each carry the phosphoserine modification. 2 disordered regions span residues 656 to 686 and 717 to 839; these read SPLQ…SSGS and HKQQ…VHKV. Positions 724 to 736 are enriched in basic and acidic residues; that stretch reads EPERHVWHRRESD. Acidic residues-rich tracts occupy residues 737-747 and 823-832; these read ESGESAPDEGG and VPEEGSEDEL.

Belongs to the ATG9 family. As to quaternary structure, homotrimer; forms a homotrimer with a central pore that forms a path between the two membrane leaflets. Interacts (via cytoplasmic its C-terminus) with ATG2A. Interacts with SUPT20H. Interacts (via the tyrosine-based sorting signal motif) with AP4M1; promoting association with the AP-4 complex. Interacts with ARFIP1 and ARFIP2. Interacts with PI4K2A and PI4KB. Interacts with ATG4A; the interaction is direct and promotes ATG9A trafficking. Ufmylated in a DDRGK1 dependent manner.

It localises to the preautophagosomal structure membrane. The protein localises to the cytoplasmic vesicle. The protein resides in the autophagosome membrane. Its subcellular location is the golgi apparatus. It is found in the trans-Golgi network membrane. It localises to the late endosome membrane. The protein localises to the recycling endosome membrane. The protein resides in the endoplasmic reticulum membrane. Its subcellular location is the mitochondrion membrane. The enzyme catalyses a 1,2-diacyl-sn-glycero-3-phosphocholine(in) = a 1,2-diacyl-sn-glycero-3-phosphocholine(out). It carries out the reaction a 1,2-diacyl-sn-glycero-3-phospho-L-serine(in) = a 1,2-diacyl-sn-glycero-3-phospho-L-serine(out). The catalysed reaction is a 1,2-diacyl-sn-glycero-3-phosphoethanolamine(in) = a 1,2-diacyl-sn-glycero-3-phosphoethanolamine(out). Functionally, phospholipid scramblase involved in autophagy by mediating autophagosomal membrane expansion. Cycles between the preautophagosomal structure/phagophore assembly site (PAS) and the cytoplasmic vesicle pool and supplies membrane for the growing autophagosome. Lipid scramblase activity plays a key role in preautophagosomal structure/phagophore assembly by distributing the phospholipids that arrive through ATG2 (ATG2A or ATG2B) from the cytoplasmic to the luminal leaflet of the bilayer, thereby driving autophagosomal membrane expansion. Also required to supply phosphatidylinositol 4-phosphate to the autophagosome initiation site by recruiting the phosphatidylinositol 4-kinase beta (PI4KB) in a process dependent on ARFIP2, but not ARFIP1. In addition to autophagy, also plays a role in necrotic cell death. The protein is Autophagy-related protein 9A of Homo sapiens (Human).